The primary structure comprises 177 residues: Thymidine kinase (177 aa).

G11 to S18 serves as a coordination point for ATP. E83 serves as the catalytic Proton acceptor. Position 113 (F113) interacts with substrate. C138 and C141 together coordinate Zn(2+). I157–G161 is a binding site for substrate. Zn(2+) is bound by residues C170 and C173.

This sequence belongs to the thymidine kinase family. In terms of assembly, homotetramer. Two molecules of substrate bind to each enzyme tetramer.

The catalysed reaction is thymidine + ATP = dTMP + ADP + H(+). In terms of biological role, phosphorylates thymidine and thymidine analogs, such as azidothymidine (AZT). Part of the salvage pathway for pyrimidine deoxyribonucleotide synthesis. This chain is Thymidine kinase (OPG101), found in Procyon lotor (Raccoon).